The chain runs to 180 residues: Large ribosomal subunit protein uL5 (180 aa).

Belongs to the universal ribosomal protein uL5 family. Part of the 50S ribosomal subunit; part of the 5S rRNA/L5/L18/L25 subcomplex. Contacts the 5S rRNA and the P site tRNA. Forms a bridge to the 30S subunit in the 70S ribosome.

This is one of the proteins that bind and probably mediate the attachment of the 5S RNA into the large ribosomal subunit, where it forms part of the central protuberance. In the 70S ribosome it contacts protein S13 of the 30S subunit (bridge B1b), connecting the 2 subunits; this bridge is implicated in subunit movement. Contacts the P site tRNA; the 5S rRNA and some of its associated proteins might help stabilize positioning of ribosome-bound tRNAs. The chain is Large ribosomal subunit protein uL5 from Clostridium botulinum (strain Loch Maree / Type A3).